A 430-amino-acid chain; its full sequence is V-type ATP synthase beta chain 1 (430 aa).

It belongs to the ATPase alpha/beta chains family.

In terms of biological role, produces ATP from ADP in the presence of a proton gradient across the membrane. The V-type beta chain is a regulatory subunit. The polypeptide is V-type ATP synthase beta chain 1 (atpB1) (Treponema pallidum (strain Nichols)).